Consider the following 214-residue polypeptide: Phosphoenolpyruvate guanylyltransferase 2 (214 aa).

Positions 135, 150, and 153 each coordinate phosphoenolpyruvate.

Belongs to the CofC family.

The enzyme catalyses phosphoenolpyruvate + GTP + H(+) = enolpyruvoyl-2-diphospho-5'-guanosine + diphosphate. It functions in the pathway cofactor biosynthesis; coenzyme F420 biosynthesis. Its function is as follows. Guanylyltransferase that catalyzes the activation of phosphoenolpyruvate (PEP) as enolpyruvoyl-2-diphospho-5'-guanosine, via the condensation of PEP with GTP. It is involved in the biosynthesis of coenzyme F420, a hydride carrier cofactor. The polypeptide is Phosphoenolpyruvate guanylyltransferase 2 (Rhodococcus jostii (strain RHA1)).